Consider the following 375-residue polypeptide: Erythronate-4-phosphate dehydrogenase (375 aa).

The substrate site is built by serine 45 and threonine 66. Positions 146 and 175 each coordinate NAD(+). Residue arginine 208 is part of the active site. Aspartate 232 provides a ligand contact to NAD(+). Glutamate 237 is a catalytic residue. Histidine 254 (proton donor) is an active-site residue. Residue glycine 257 participates in NAD(+) binding. Tyrosine 258 is a substrate binding site.

The protein belongs to the D-isomer specific 2-hydroxyacid dehydrogenase family. PdxB subfamily. As to quaternary structure, homodimer.

The protein resides in the cytoplasm. The catalysed reaction is 4-phospho-D-erythronate + NAD(+) = (R)-3-hydroxy-2-oxo-4-phosphooxybutanoate + NADH + H(+). It participates in cofactor biosynthesis; pyridoxine 5'-phosphate biosynthesis; pyridoxine 5'-phosphate from D-erythrose 4-phosphate: step 2/5. Functionally, catalyzes the oxidation of erythronate-4-phosphate to 3-hydroxy-2-oxo-4-phosphonooxybutanoate. This is Erythronate-4-phosphate dehydrogenase from Yersinia enterocolitica serotype O:8 / biotype 1B (strain NCTC 13174 / 8081).